The sequence spans 389 residues: Ribonucleoside-diphosphate reductase subunit M2 (389 aa).

Residue S20 is modified to Phosphoserine. At T33 the chain carries Phosphothreonine. The short motif at 49–51 is the Cy element; it reads RRI. Fe cation is bound by residues D138, E169, and H172. Residue Y176 is part of the active site. E232, E266, and H269 together coordinate Fe cation.

This sequence belongs to the ribonucleoside diphosphate reductase small chain family. As to quaternary structure, heterodimer of a large and a small subunit. Interacts (via Cy motif and when phosphorylated at Thr-33) with CCNF; the interaction occurs exclusively in G2 and early M. Fe cation serves as cofactor. Phosphorylation on Ser-20 relieves the inhibitory effect on Wnt signaling. Phosphorylated on Thr-33 by CDK1 and CDK2; predominantly in G2 and M phase. Post-translationally, ubiquitinated by the SCF(CCNF) E3 ubiquitin-protein ligase complex; leading to its degradation by the proteasome.

The protein localises to the cytoplasm. It localises to the nucleus. It catalyses the reaction a 2'-deoxyribonucleoside 5'-diphosphate + [thioredoxin]-disulfide + H2O = a ribonucleoside 5'-diphosphate + [thioredoxin]-dithiol. Provides the precursors necessary for DNA synthesis. Catalyzes the biosynthesis of deoxyribonucleotides from the corresponding ribonucleotides. Inhibits Wnt signaling. This Macaca fascicularis (Crab-eating macaque) protein is Ribonucleoside-diphosphate reductase subunit M2 (RRM2).